We begin with the raw amino-acid sequence, 327 residues long: Beta-ketoacyl-[acyl-carrier-protein] synthase III (327 aa).

Catalysis depends on residues Cys114 and His254. Positions 255-259 (QANRR) are ACP-binding. Asn284 is an active-site residue.

It belongs to the thiolase-like superfamily. FabH family. As to quaternary structure, homodimer.

It localises to the cytoplasm. The enzyme catalyses malonyl-[ACP] + acetyl-CoA + H(+) = 3-oxobutanoyl-[ACP] + CO2 + CoA. It functions in the pathway lipid metabolism; fatty acid biosynthesis. Its function is as follows. Catalyzes the condensation reaction of fatty acid synthesis by the addition to an acyl acceptor of two carbons from malonyl-ACP. Catalyzes the first condensation reaction which initiates fatty acid synthesis and may therefore play a role in governing the total rate of fatty acid production. Possesses both acetoacetyl-ACP synthase and acetyl transacylase activities. Its substrate specificity determines the biosynthesis of branched-chain and/or straight-chain of fatty acids. This is Beta-ketoacyl-[acyl-carrier-protein] synthase III from Lactobacillus helveticus (strain DPC 4571).